Reading from the N-terminus, the 73-residue chain is Kappa-scoloptoxin(03)-Ssm1c (73 aa).

A signal peptide spans 1-23 (MKSWMAILLVMALIIFTLDNCYS). Cystine bridges form between C32-C58, C41-C57, and C44-C67.

This sequence belongs to the scoloptoxin family. Expressed by the venom gland.

It localises to the secreted. Its function is as follows. Inhibits voltage-gated potassium channels. This is Kappa-scoloptoxin(03)-Ssm1c from Scolopendra mutilans (Chinese red-headed centipede).